Consider the following 431-residue polypeptide: Histidinol dehydrogenase (431 aa).

Positions 131, 193, and 216 each coordinate NAD(+). 3 residues coordinate substrate: serine 239, glutamine 261, and histidine 264. The Zn(2+) site is built by glutamine 261 and histidine 264. Catalysis depends on proton acceptor residues glutamate 329 and histidine 330. Substrate-binding residues include histidine 330, aspartate 363, glutamate 417, and histidine 422. Aspartate 363 lines the Zn(2+) pocket. Histidine 422 provides a ligand contact to Zn(2+).

This sequence belongs to the histidinol dehydrogenase family. Zn(2+) serves as cofactor.

The catalysed reaction is L-histidinol + 2 NAD(+) + H2O = L-histidine + 2 NADH + 3 H(+). It functions in the pathway amino-acid biosynthesis; L-histidine biosynthesis; L-histidine from 5-phospho-alpha-D-ribose 1-diphosphate: step 9/9. Functionally, catalyzes the sequential NAD-dependent oxidations of L-histidinol to L-histidinaldehyde and then to L-histidine. This chain is Histidinol dehydrogenase, found in Clostridium acetobutylicum (strain ATCC 824 / DSM 792 / JCM 1419 / IAM 19013 / LMG 5710 / NBRC 13948 / NRRL B-527 / VKM B-1787 / 2291 / W).